Reading from the N-terminus, the 954-residue chain is Glycine dehydrogenase (decarboxylating) (954 aa).

At K704 the chain carries N6-(pyridoxal phosphate)lysine.

This sequence belongs to the GcvP family. The glycine cleavage system is composed of four proteins: P, T, L and H. Pyridoxal 5'-phosphate is required as a cofactor.

It catalyses the reaction N(6)-[(R)-lipoyl]-L-lysyl-[glycine-cleavage complex H protein] + glycine + H(+) = N(6)-[(R)-S(8)-aminomethyldihydrolipoyl]-L-lysyl-[glycine-cleavage complex H protein] + CO2. Its function is as follows. The glycine cleavage system catalyzes the degradation of glycine. The P protein binds the alpha-amino group of glycine through its pyridoxal phosphate cofactor; CO(2) is released and the remaining methylamine moiety is then transferred to the lipoamide cofactor of the H protein. This chain is Glycine dehydrogenase (decarboxylating), found in Vibrio vulnificus (strain YJ016).